We begin with the raw amino-acid sequence, 145 residues long: Ribonuclease H (145 aa).

The RNase H type-1 domain maps to 2–143; sequence SKKEVIIYTD…ADSLARKAII (142 aa). Mg(2+) is bound by residues Asp11, Glu49, Asp71, and Asp135.

The protein belongs to the RNase H family. Monomer. It depends on Mg(2+) as a cofactor.

Its subcellular location is the cytoplasm. It carries out the reaction Endonucleolytic cleavage to 5'-phosphomonoester.. Its function is as follows. Endonuclease that specifically degrades the RNA of RNA-DNA hybrids. This is Ribonuclease H from Wolbachia pipientis wMel.